The following is a 1127-amino-acid chain: WD repeat and HMG-box DNA-binding protein 1 (1127 aa).

WD repeat units follow at residues 11–50, 52–91, 92–131, 134–173, 184–223, 228–267, and 271–310; these read GHPEGHTDVCFDDSGNFLVTCGSDGDIRIWESLDDDDPKS, SIGEKAYSFALKNGKVVTAASNNAIQLHTFPDGEPDGILT, RFTTNANHVVFNTDGTRIAAGSGDFLVKVLQVEDSTQQKT, GHSAPVLSVSFDPKDIYLASASCDGSVRIWKISDQTCEAV, FNAKSICRLAWQPKSGKFVAIPVGKAVHLYDRDSLKNICT, FITQPVNIVAWSPCGQYLVAGSVDGCIVAWNIATKACLER, and EKGYTICALAWHPHLPQIAYTDNEGNLGLLEDVCQGDVKQ. Disordered stretches follow at residues 811-1013 and 1064-1127; these read AAEQ…AENK and KAKG…FKKE. The span at 819–829 shows a compositional bias: acidic residues; it reads QNEEEDEEEED. Residues 846–857 are compositionally biased toward basic and acidic residues; that stretch reads GDSRAKPVKQDQ. Acidic residues predominate over residues 858–877; that stretch reads YEENNEEEMEEEEKEQEEAL. Polar residues-rich tracts occupy residues 881–891 and 918–937; these read TPTANPFNKSV and SASQKSPAFASNSSRSTSIL. The segment covering 948–960 has biased composition (low complexity); the sequence is SASGSPSTSKSDS. A DNA-binding region (HMG box) is located at residues 1013–1076; that stretch reads KKPKTGFQLW…GDYPGEDGAD (64 aa). Residues 1087–1100 show a composition bias toward polar residues; the sequence is NMASNGCPQENTDS.

In terms of assembly, homodimer. Found in oocytes and in various other cells.

The protein localises to the nucleus. It is found in the nucleoplasm. It localises to the cytoplasm. Functionally, core replisome component that acts as a replication initiation factor. Binds directly to the CMG complex and functions as a hub to recruit additional proteins to the replication fork. This chain is WD repeat and HMG-box DNA-binding protein 1 (wdhd1), found in Xenopus laevis (African clawed frog).